The primary structure comprises 309 residues: Ribonuclease Z (309 aa).

Zn(2+) is bound by residues His63, His65, Asp67, His68, His141, Asp212, and His270. Catalysis depends on Asp67, which acts as the Proton acceptor.

The protein belongs to the RNase Z family. Homodimer. Zn(2+) is required as a cofactor.

It catalyses the reaction Endonucleolytic cleavage of RNA, removing extra 3' nucleotides from tRNA precursor, generating 3' termini of tRNAs. A 3'-hydroxy group is left at the tRNA terminus and a 5'-phosphoryl group is left at the trailer molecule.. In terms of biological role, zinc phosphodiesterase, which displays some tRNA 3'-processing endonuclease activity. Probably involved in tRNA maturation, by removing a 3'-trailer from precursor tRNA. The chain is Ribonuclease Z from Limosilactobacillus reuteri (strain DSM 20016) (Lactobacillus reuteri).